The primary structure comprises 504 residues: Fibroblast growth factor receptor-like 1 (504 aa).

Residues 1–24 (MTPSPLLLLLLPPLLLGAFPPAAA) form the signal peptide. Topologically, residues 25–378 (ARGPPKMADK…SSSATSLPWP (354 aa)) are extracellular. Positions 29 to 115 (PKMADKVVPR…GSLSVNYTLV (87 aa)) constitute an Ig-like C2-type 1 domain. The cysteines at positions 51 and 99 are disulfide-linked. A glycan (N-linked (GlcNAc...) asparagine) is linked at Asn-111. The segment at 123–155 (GKESLGPDSSSGGQEDPASQQWARPRFTQPSKM) is disordered. Positions 129–144 (PDSSSGGQEDPASQQW) are enriched in polar residues. Ig-like C2-type domains are found at residues 147-237 (PRFT…YKVD) and 246-354 (PVLT…AFLT). A disulfide bridge connects residues Cys-172 and Cys-221. 3 N-linked (GlcNAc...) asparagine glycosylation sites follow: Asn-231, Asn-255, and Asn-293. Cys-268 and Cys-338 are disulfide-bonded. Residues 379–399 (VVIGIPAGAVFILGTLLLWLC) form a helical membrane-spanning segment. Residues 400-504 (QAQKKPCTPA…KVHQHIHYQC (105 aa)) are Cytoplasmic-facing. Pro residues predominate over residues 407-418 (TPAPAPPLPGHR). The tract at residues 407–435 (TPAPAPPLPGHRPPGTARDRSGDKDLPSL) is disordered. The segment covering 423 to 432 (ARDRSGDKDL) has biased composition (basic and acidic residues).

Interacts with FGF2 with a low affinity. In terms of tissue distribution, expressed preferentially in cartilaginous tissues and pancreas. Highly expressed in the liver, kidney, heart, brain and skeletal muscle. Weakly expressed in the lung, small intestine and spleen.

The protein localises to the membrane. Has a negative effect on cell proliferation. This is Fibroblast growth factor receptor-like 1 (FGFRL1) from Homo sapiens (Human).